Reading from the N-terminus, the 148-residue chain is Small ribosomal subunit protein bS16 (148 aa).

A compositionally biased stretch (low complexity) spans 111–122 (AAAGEEPVAEAT). The tract at residues 111 to 148 (AAAGEEPVAEATTPKKKGGKKAEAEDKAEEQKSEEGQA) is disordered. Basic and acidic residues predominate over residues 130-148 (KKAEAEDKAEEQKSEEGQA).

Belongs to the bacterial ribosomal protein bS16 family.

The protein is Small ribosomal subunit protein bS16 of Saccharopolyspora erythraea (strain ATCC 11635 / DSM 40517 / JCM 4748 / NBRC 13426 / NCIMB 8594 / NRRL 2338).